Reading from the N-terminus, the 1277-residue chain is Membrane-associated guanylate kinase, WW and PDZ domain-containing protein 2 (1277 aa).

Positions 17–101 constitute a PDZ domain; the sequence is ESVIGRNPEG…PLRLKCVKQG (85 aa). Positions 109–283 constitute a Guanylate kinase-like domain; it reads RHYLNLRFQK…APVYSQPEEL (175 aa). The disordered stretch occupies residues 205–308; it reads PGATPSAEGK…EDSDPLPDNW (104 aa). Residues 281-296 show a composition bias toward basic and acidic residues; that stretch reads EELKDQMDDTKSTKPE. WW domains lie at 302–335 and 348–381; these read DPLP…DPRL and NELP…NPVL. Residues 302 to 381 are interaction with DDN; the sequence is DPLPDNWEMA…RRTQFENPVL (80 aa). The residue at position 362 (Tyr-362) is a Phosphotyrosine. The 85-residue stretch at 426–510 folds into the PDZ 1 domain; that stretch reads STTLKKSNMG…SVNLVLCRGY (85 aa). The segment at 556–575 is disordered; sequence QSVPDITDRPPHSLHSMPAD. One can recognise a PDZ 2 domain in the interval 605-683; it reads TLTIVKGAKG…ETSLIIHRGG (79 aa). Ser-686 bears the Phosphoserine mark. The 83-residue stretch at 778–860 folds into the PDZ 3 domain; sequence DVHLRRMESG…NGQVNLTVRR (83 aa). Tyr-827 carries the phosphotyrosine modification. A disordered region spans residues 869-913; that stretch reads CPENGRSPGSVSTHHSSPRSDYATYANSNHAAPSNNASPPEGFAS. 2 positions are modified to phosphoserine: Ser-884 and Ser-885. A compositionally biased stretch (low complexity) spans 894–908; the sequence is ANSNHAAPSNNASPP. In terms of domain architecture, PDZ 4 spans 920-1010; sequence DVIIHRKENE…SVTLRIIPQE (91 aa). Over residues 1011–1042 the composition is skewed to polar residues; sequence ELNNPTSAPSSEKQSPMAQQHSPLAQQHSPLA. Positions 1011 to 1130 are disordered; it reads ELNNPTSAPS…PDTRQYPLSD (120 aa). Residues 1069-1085 are compositionally biased toward basic and acidic residues; it reads NSYRSEVKARQDVKPDI. The PDZ 5 domain maps to 1141–1223; that stretch reads TVDMEKGAKG…RVRLLLKRGT (83 aa).

This sequence belongs to the MAGUK family. As to quaternary structure, interacts (via its WW domains) with DRPLA. Interacts with CTNNB1, ACVR2A, SMAD2 and SMAD3. Part of a complex consisting of MAGI2/ARIP1, ACVR2A, ACVR1B and SMAD3. May interact with HTR2A and IGSF9. Interacts with HTR4. Interacts (via guanylate kinase domain) with DLGAP1. Interacts (via PDZ domains) with GRIN2A, GRID2 and NLGN1. Interacts with CTNND2. Interacts with MAGUIN-1. Interacts (via its second PDZ domain) with PTEN (via unphosphorylated C-terminus); this interaction diminishes the degradation rate of PTEN. Found in a complex, at least composed of KIDINS220, MAGI2, NTRK1 and RAPGEF2; the complex is mainly formed at late endosomes in a NGF-dependent manner. Interacts with RAPGEF2; the interaction occurs before or after nerve growth factor (NGF) stimulation. Isoform 1 interacts (via PDZ domain) with KIDINS220 isoform 2 (via C-terminal domain). Interacts with DDN. Identified in a complex with ACTN4, CASK, IQGAP1, NPHS1, SPTAN1 and SPTBN1. Interacts with DLL1. Found in a complex with IGSF9B and NLGN2; the interaction with IGSF9B is mediated via the PDZ 5 and PDZ 6 domains, while the interaction with NLGN2 is mediated via the WW1, WW2 and PDZ2 domains. Interacts (via PDZ 6 domain) with USH1G (via SAM domain); the interaction is triggered by phosphorylation of USH1G by CK2 and negatively regulates MAGI2-mediated endocytosis. Expressed in the foot process layer of podocytes of the kidney glomeruli but not in tubules (at protein level). Expressed in the brain.

The protein localises to the cytoplasm. It is found in the late endosome. It localises to the synapse. The protein resides in the synaptosome. Its subcellular location is the cell membrane. The protein localises to the cytoskeleton. It is found in the microtubule organizing center. It localises to the centrosome. The protein resides in the cell projection. Its subcellular location is the cilium. The protein localises to the centriole. It is found in the photoreceptor inner segment. It localises to the photoreceptor outer segment. Seems to act as scaffold molecule at synaptic junctions by assembling neurotransmitter receptors and cell adhesion proteins. Plays a role in nerve growth factor (NGF)-induced recruitment of RAPGEF2 to late endosomes and neurite outgrowth. May play a role in regulating activin-mediated signaling in neuronal cells. Enhances the ability of PTEN to suppress AKT1 activation. Plays a role in receptor-mediated clathrin-dependent endocytosis which is required for ciliogenesis. In Rattus norvegicus (Rat), this protein is Membrane-associated guanylate kinase, WW and PDZ domain-containing protein 2 (Magi2).